Here is a 436-residue protein sequence, read N- to C-terminus: Probable protein phosphatase 2C 15 (436 aa).

Positions 30 to 302 constitute a PPM-type phosphatase domain; the sequence is KAAKMEKPIV…DDTTCIVVDI (273 aa). Mn(2+) contacts are provided by D78, G79, D254, and D293.

The protein belongs to the PP2C family. Requires Mg(2+) as cofactor. It depends on Mn(2+) as a cofactor.

It carries out the reaction O-phospho-L-seryl-[protein] + H2O = L-seryl-[protein] + phosphate. The enzyme catalyses O-phospho-L-threonyl-[protein] + H2O = L-threonyl-[protein] + phosphate. In Arabidopsis thaliana (Mouse-ear cress), this protein is Probable protein phosphatase 2C 15.